Here is a 1358-residue protein sequence, read N- to C-terminus: DNA-directed RNA polymerase subunit beta (1358 aa).

It belongs to the RNA polymerase beta chain family. The RNAP catalytic core consists of 2 alpha, 1 beta, 1 beta' and 1 omega subunit. When a sigma factor is associated with the core the holoenzyme is formed, which can initiate transcription.

The enzyme catalyses RNA(n) + a ribonucleoside 5'-triphosphate = RNA(n+1) + diphosphate. In terms of biological role, DNA-dependent RNA polymerase catalyzes the transcription of DNA into RNA using the four ribonucleoside triphosphates as substrates. This Xanthobacter autotrophicus (strain ATCC BAA-1158 / Py2) protein is DNA-directed RNA polymerase subunit beta.